Here is a 290-residue protein sequence, read N- to C-terminus: MAISNTNLLQTKKPISLPLLAFITLFLMLLNRVNSSDSLSFTFDNFRPDQRDLILQGDAKISSGGDSLQLTKTDTSGKPVRGSVGRALYYTPLHLWDSSTNRLASFQTTFTFVLSSPTNNPGDGIAFFIAPPETTIPPGSSGGLLGLFSPDNALNNSLNQIVAVEFDTFVNNNWDPSHRHIGIDVNTIKSSATVRWQRENGSLATAQISYNSDTKKLSVVSSYPNTQANEDYTVSYDVDLKTELPEWVRVGFSGSTGGYVQNHNILSWTFNSNLQSSRAKKEDIYIKRYV.

An N-terminal signal peptide occupies residues 1–35 (MAISNTNLLQTKKPISLPLLAFITLFLMLLNRVNS). Residue asparagine 155 is glycosylated (N-linked (GlcNAc...) asparagine). Mn(2+)-binding residues include glutamate 165 and aspartate 167. Residues aspartate 167, asparagine 171, and aspartate 175 each contribute to the Ca(2+) site. The Mn(2+) site is built by aspartate 175 and histidine 180. An N-linked (GlcNAc...) asparagine glycan is attached at asparagine 200.

The protein belongs to the leguminous lectin family. As to quaternary structure, homotetramer.

Its function is as follows. Mannose/glucose binding bark lectin. Functionally, bark lectins are storage proteins that probably maintain stocks of nitrogen during dormant period. Self-aggregatable molecules that can bind their own carbohydrate side chains. They could also play a role in the plant's defense against phytophagous invertebrates or herbivorous higher animals. This chain is Agglutinin-2, found in Cladrastis kentukea (Yellow wood).